The sequence spans 853 residues: MFLPHMNHLTLEQTFFSQVLPKTVKLFDDMMYELTSQARGLSSQNLEIQTTLRNILQTMVQLLGALTGCVQHICATQESIILENIQSLPSSVLHIIKSTFVHCKNSESVYSGCLHLVSDLLQALFKEAYSLQKQLMELLDMVCMDPLVDDNDDILNMVIVIHSLLDICSVISSMDHAFHANTWKFIIKQSLKHQSIIKSQLKHKDIITSLCEDILFSFHSCLQLAEQMTQSDAQDNADYRLFQKTLKLCRFFANSLLHYAKEFLPFLSDSCCTLHQLYLQIHSKFPPSLYATRISKAHQEEIAGAFLVTLDPLISQLLTFQPFMQVVLDSKLDLPCELQFPQCLLLVVVMDKLPSQPKEVQTLWCTDSQVSETTTRISLLKAVFYSFEQCSGELSLPVHLQGLKSKGKAEVAVTLYQHVCVHLCTFITSFHPSLFAELDAALLNAVLSANMITSLLAMDAWCFLARYGTAELCAHHVTIVAHLIKSCPGECYQLINLSILLKRLFFFMAPPHQLEFIQKFSPKEAENLPLWQHISFQALPPELREQTVHEVTTVGTAECRKWLSRSRTLGELESLNTVLSALLAVCNSAGEALDTGKQTAIIEVVSQLWAFLNIKQVADQPYVQQTFSLLLPLLGFFIQTLDPKLILQAVTLQTSLLKLELPDYVRLAMLDFVSSLGKLFIPEAIQDRILPNLSCMFALLLADRSWLLEQHTLEAFTQFAEGTNHEEIVPQCLSSEETKNKVVSFLEKTGFVDETEAAKVERVKQEKGIFWEPFANVTVEEAKRSSLQPYAKRARQEFPWEEEYRSALHTIAGALEATESLLQKGPAPAWLSMEMEALQERMDKLKRYIHTLG.

Phosphoserine; by PLK1 is present on residues S43 and S744. N6-acetyllysine is present on K792.

As to quaternary structure, interacts (via its N-terminal region) with PLK1; controls PLK1 kinase activity. Interacts (via the KVVXF motif) with PPP1CC; controls PLK1 kinase activity. Interacts with FIGNL1; may regulate homologous recombination. In terms of processing, phosphorylation at Ser-43 by PLK1 strengthens FIRRM-PLK1 interaction. Phosphorylation at Ser-744 by PLK1 negatively regulates its interaction with PPP1CC.

The protein localises to the chromosome. The protein resides in the centromere. Its subcellular location is the kinetochore. It localises to the nucleus. It is found in the midbody. The protein localises to the cytoplasm. The protein resides in the cytoskeleton. Its subcellular location is the spindle. Functionally, regulates PLK1 kinase activity at kinetochores and promotes faithful chromosome segregation in prometaphase by bridging kinase and phosphatase activities. Phosphorylation of FIRRM by PLK1 negatively regulates its interaction with the phosphatase, PPP1CC, thus creating a negative feedback loop for maintaining proper PLK1 kinase activity during mitosis. In complex with FIGL1 may regulate homologous recombination. The polypeptide is FIGNL1-interacting regulator of recombination and mitosis (Homo sapiens (Human)).